Here is a 297-residue protein sequence, read N- to C-terminus: Formiminotransferase cyclodeaminase-like protein (297 aa).

A formiminotransferase N-subdomain region spans residues 2–196 (LREMLGCCKV…GVVAVGACGW (195 aa)). His-89 acts as the For formimidoyltransferase activity in catalysis. 178–187 (GPQEVSKAKG) serves as a coordination point for folate.

The protein belongs to the formiminotransferase family. In terms of tissue distribution, expressed constitutively in roots, stems, leaves and flowers.

Its subcellular location is the golgi apparatus. The protein resides in the trans-Golgi network. The enzyme catalyses (6S)-5-formyl-5,6,7,8-tetrahydrofolate + L-glutamate = N-formyl-L-glutamate + (6S)-5,6,7,8-tetrahydrofolate + H(+). It carries out the reaction 5-formimidoyltetrahydrofolate + L-glutamate = N-formimidoyl-L-glutamate + (6S)-5,6,7,8-tetrahydrofolate. It functions in the pathway one-carbon metabolism; tetrahydrofolate interconversion. In terms of biological role, involved in the regulation of root growth. May regulate sorting and/or transportation of trans-Golgi network (TGN) vesicles in root cap peripheral cells, thus influencing the extracellular secretion of mucilage components in the root cap. The polypeptide is Formiminotransferase cyclodeaminase-like protein (Arabidopsis thaliana (Mouse-ear cress)).